A 272-amino-acid polypeptide reads, in one-letter code: Pyrroline-5-carboxylate reductase (272 aa).

It belongs to the pyrroline-5-carboxylate reductase family.

It localises to the cytoplasm. The catalysed reaction is L-proline + NADP(+) = (S)-1-pyrroline-5-carboxylate + NADPH + 2 H(+). The enzyme catalyses L-proline + NAD(+) = (S)-1-pyrroline-5-carboxylate + NADH + 2 H(+). It participates in amino-acid biosynthesis; L-proline biosynthesis; L-proline from L-glutamate 5-semialdehyde: step 1/1. Catalyzes the reduction of 1-pyrroline-5-carboxylate (PCA) to L-proline. This Vibrio alginolyticus protein is Pyrroline-5-carboxylate reductase.